Here is a 263-residue protein sequence, read N- to C-terminus: Hemophilin (263 aa).

The signal sequence occupies residues 1-20 (MKISQLFLGLVACSTAFAYA). Positions 42, 58, 104, and 105 each coordinate heme b.

As to quaternary structure, monomer in solution. Interacts with host hemoglobin.

It localises to the secreted. In terms of biological role, part of a high affinity heme acquisition system. Functions as a hemophore that acquires heme from human hemoglobin and delivers the heme to its cognate receptor, HphR, facilitating transport of heme across the bacterial outer membrane. Apo HphA interacts specifically with human hemoglobin and steals heme through a passive process probably due to its high affinity for heme. It can also acquire heme complexed to human serum albumin. Plays a supporting role for full virulence, acting as an accessory factor that enhances the process of heme uptake. The polypeptide is Hemophilin (Acinetobacter baumannii).